Here is a 242-residue protein sequence, read N- to C-terminus: Ribonuclease HII (242 aa).

One can recognise an RNase H type-2 domain in the interval 21-234; sequence KIIVGLDEAG…SKNLLKEIEE (214 aa). A divalent metal cation-binding residues include Asp27, Glu28, and Asp128.

Belongs to the RNase HII family. Requires Mn(2+) as cofactor. Mg(2+) serves as cofactor.

It localises to the cytoplasm. The catalysed reaction is Endonucleolytic cleavage to 5'-phosphomonoester.. In terms of biological role, endonuclease that specifically degrades the RNA of RNA-DNA hybrids. In Methanococcus maripaludis (strain DSM 14266 / JCM 13030 / NBRC 101832 / S2 / LL), this protein is Ribonuclease HII.